The sequence spans 657 residues: Glycogen debranching enzyme (657 aa).

The active-site Nucleophile is Asp336. Glu371 acts as the Proton donor in catalysis. Positions 460–479 are disordered; it reads ANGEENRDGTNNNYSNNHGK.

It belongs to the glycosyl hydrolase 13 family.

It catalyses the reaction Hydrolysis of (1-&gt;6)-alpha-D-glucosidic linkages to branches with degrees of polymerization of three or four glucose residues in limit dextrin.. The protein operates within glycan degradation; glycogen degradation. Functionally, removes maltotriose and maltotetraose chains that are attached by 1,6-alpha-linkage to the limit dextrin main chain, generating a debranched limit dextrin. This Escherichia coli O6:K15:H31 (strain 536 / UPEC) protein is Glycogen debranching enzyme.